The following is a 418-amino-acid chain: Tyrosine--tRNA ligase (418 aa).

Residue tyrosine 34 participates in L-tyrosine binding. The 'HIGH' region signature appears at 39–48; the sequence is PTADSLHLGH. 2 residues coordinate L-tyrosine: tyrosine 169 and glutamine 173. A 'KMSKS' region motif is present at residues 229-233; the sequence is KFGKS. Lysine 232 provides a ligand contact to ATP. Residues 352–418 form the S4 RNA-binding domain; the sequence is LNIVDLLVTA…GKKKYFVLTY (67 aa).

This sequence belongs to the class-I aminoacyl-tRNA synthetase family. TyrS type 1 subfamily. In terms of assembly, homodimer.

The protein resides in the cytoplasm. It carries out the reaction tRNA(Tyr) + L-tyrosine + ATP = L-tyrosyl-tRNA(Tyr) + AMP + diphosphate + H(+). Its function is as follows. Catalyzes the attachment of tyrosine to tRNA(Tyr) in a two-step reaction: tyrosine is first activated by ATP to form Tyr-AMP and then transferred to the acceptor end of tRNA(Tyr). This Streptococcus gordonii (strain Challis / ATCC 35105 / BCRC 15272 / CH1 / DL1 / V288) protein is Tyrosine--tRNA ligase.